We begin with the raw amino-acid sequence, 563 residues long: (R)-mandelonitrile lyase 2 (563 aa).

Positions 1 to 27 (MEKSTMSAILLVLYIFVLHLQYSEVHS) are cleaved as a signal peptide. FAD is bound by residues 63–64 (TS), 82–83 (ER), Val129, Thr133, and 137–140 (NAGV). 2 N-linked (GlcNAc...) asparagine glycosylation sites follow: Asn145 and Asn162. Val244 is an FAD binding site. Cys355 lines the substrate pocket. 2 N-linked (GlcNAc...) asparagine glycosylation sites follow: Asn379 and Asn419. Residues Cys426 and Cys477 are joined by a disulfide bond. Substrate is bound at residue Tyr484. Residues 485–486 (WH) and Gly514 each bind FAD. His486 functions as the Proton donor in the catalytic mechanism. His524 functions as the Proton acceptor in the catalytic mechanism. 525-526 (PQ) contributes to the FAD binding site.

Belongs to the GMC oxidoreductase family. Monomer. FAD is required as a cofactor. Post-translationally, glycosylated. Deglycosylation does not affect the enzymatic activity.

It catalyses the reaction (R)-mandelonitrile = benzaldehyde + hydrogen cyanide. Functionally, involved in cyanogenesis, the release of HCN from injured tissues. Catalyzes the stereospecific addition of HCN to a variety of aldehydes in vitro. Has no oxidase activity. The redox properties of the FAD cofactor appear to be unimportant for catalysis. The chain is (R)-mandelonitrile lyase 2 (MDL2) from Prunus dulcis (Almond).